Reading from the N-terminus, the 348-residue chain is Selenide, water dikinase (348 aa).

Residue C17 is part of the active site. ATP contacts are provided by residues K20 and 47 to 49 (THD). D50 contacts Mg(2+). ATP contacts are provided by residues D67, D90, and 138–140 (GHT). D90 contributes to the Mg(2+) binding site. Mg(2+) is bound at residue D226.

Belongs to the selenophosphate synthase 1 family. Class I subfamily. As to quaternary structure, homodimer. Mg(2+) serves as cofactor.

The catalysed reaction is hydrogenselenide + ATP + H2O = selenophosphate + AMP + phosphate + 2 H(+). Synthesizes selenophosphate from selenide and ATP. This chain is Selenide, water dikinase, found in Porphyromonas gingivalis (strain ATCC 33277 / DSM 20709 / CIP 103683 / JCM 12257 / NCTC 11834 / 2561).